The following is a 91-amino-acid chain: Small ribosomal subunit protein uS19 (91 aa).

This sequence belongs to the universal ribosomal protein uS19 family.

Protein S19 forms a complex with S13 that binds strongly to the 16S ribosomal RNA. This chain is Small ribosomal subunit protein uS19 (rpsS), found in Mycoplasmopsis pulmonis (strain UAB CTIP) (Mycoplasma pulmonis).